Reading from the N-terminus, the 296-residue chain is Nucleotide-binding protein SEQ_0857 (296 aa).

13–20 (GMSGAGKT) provides a ligand contact to ATP. Position 63–66 (63–66 (DMRS)) interacts with GTP.

This sequence belongs to the RapZ-like family.

Its function is as follows. Displays ATPase and GTPase activities. The chain is Nucleotide-binding protein SEQ_0857 from Streptococcus equi subsp. equi (strain 4047).